Reading from the N-terminus, the 259-residue chain is Phosphoadenosine 5'-phosphosulfate reductase (259 aa).

The active-site Nucleophile; cysteine thiosulfonate intermediate is the Cys244.

Belongs to the PAPS reductase family. CysH subfamily.

It is found in the cytoplasm. It carries out the reaction [thioredoxin]-disulfide + sulfite + adenosine 3',5'-bisphosphate + 2 H(+) = [thioredoxin]-dithiol + 3'-phosphoadenylyl sulfate. The protein operates within sulfur metabolism; hydrogen sulfide biosynthesis; sulfite from sulfate: step 3/3. Catalyzes the formation of sulfite from phosphoadenosine 5'-phosphosulfate (PAPS) using thioredoxin as an electron donor. This Vibrio parahaemolyticus serotype O3:K6 (strain RIMD 2210633) protein is Phosphoadenosine 5'-phosphosulfate reductase.